We begin with the raw amino-acid sequence, 898 residues long: Eukaryotic translation initiation factor 3 subunit C (898 aa).

Residues 1-10 (MSRFFHAKED) are compositionally biased toward basic and acidic residues. Disordered stretches follow at residues 1-38 (MSRF…DDLD) and 162-238 (VTDY…SVTK). The segment covering 11 to 23 (SDSDTSSSEDEVE) has biased composition (acidic residues). Over residues 24–37 (DQKVNKSAKFRDDL) the composition is skewed to basic and acidic residues. A compositionally biased stretch (acidic residues) spans 170–187 (DEDGYETPEDEDDDDFGE). The span at 189 to 202 (SESKAEKSPGKPSE) shows a compositional bias: basic and acidic residues. Over residues 209 to 218 (SDSDSDDDDS) the composition is skewed to acidic residues. Positions 219 to 228 (SNWSSEPESN) are enriched in low complexity. The PCI domain occupies 630 to 806 (YHMHINVELM…DCLIMHRVEP (177 aa)). A disordered region spans residues 829–898 (QILEPRTGRG…RRHPQKPRAF (70 aa)). 2 stretches are compositionally biased toward basic and acidic residues: residues 850–859 (RNERQGDKQK) and 866–878 (GERR…DGKR). Basic residues predominate over residues 888-898 (QRRHPQKPRAF).

Belongs to the eIF-3 subunit C family. As to quaternary structure, component of the eukaryotic translation initiation factor 3 (eIF-3) complex.

The protein localises to the cytoplasm. In terms of biological role, component of the eukaryotic translation initiation factor 3 (eIF-3) complex, which is involved in protein synthesis of a specialized repertoire of mRNAs and, together with other initiation factors, stimulates binding of mRNA and methionyl-tRNAi to the 40S ribosome. The eIF-3 complex specifically targets and initiates translation of a subset of mRNAs involved in cell proliferation. This is Eukaryotic translation initiation factor 3 subunit C from Caenorhabditis elegans.